A 185-amino-acid polypeptide reads, in one-letter code: Pectinesterase inhibitor (185 aa).

An N-terminal signal peptide occupies residues 1 to 32 (MAFSYCSSSLFVSLLLVILFISPLSQRPSVKA). 2 cysteine pairs are disulfide-bonded: Cys41–Cys50 and Cys106–Cys146. Residue Lys185 is a propeptide.

The protein belongs to the PMEI family. In terms of tissue distribution, fruit.

Its subcellular location is the cytoplasm. Its function is as follows. Inhibits pectin methylesterase; may be involved in the regulation of fruit ripening. This Actinidia deliciosa (Kiwi) protein is Pectinesterase inhibitor (PMEI).